A 301-amino-acid polypeptide reads, in one-letter code: Protein RESTRICTED TEV MOVEMENT 3 (301 aa).

The region spanning 6–134 is the MATH domain; it reads DKKITWTIKN…NGELKIVVEI (129 aa). Residues 235–289 are a coiled coil; it reads KLDWLEKKLYEVSEKKENEEASETGLQEMEEELKDMKQKCLEMEALVEKEKAKVS.

In terms of assembly, self-interacts. Interacts with RTM1.

In terms of biological role, required for the restriction of long-distance movement of the pathogenic tobacco etch virus (TEV) without causing a hypersensitive response or inducing systemic acquired resistance. This Arabidopsis thaliana (Mouse-ear cress) protein is Protein RESTRICTED TEV MOVEMENT 3 (RTM3).